Reading from the N-terminus, the 117-residue chain is UPF0342 protein lwe2240 (117 aa).

The protein belongs to the UPF0342 family.

The protein is UPF0342 protein lwe2240 of Listeria welshimeri serovar 6b (strain ATCC 35897 / DSM 20650 / CCUG 15529 / CIP 8149 / NCTC 11857 / SLCC 5334 / V8).